Here is a 182-residue protein sequence, read N- to C-terminus: Large ribosomal subunit protein bL17 (182 aa).

Residues 126–182 form a disordered region; sequence ERANRVAASKAKKAEAEAAEAKAEEAEEAPEVEADTATDKAAEAEAAEAADEAAEDK. Over residues 137–149 the composition is skewed to basic and acidic residues; sequence KKAEAEAAEAKAE. Acidic residues-rich tracts occupy residues 150-161 and 170-182; these read EAEEAPEVEADT and EAAE…AEDK.

It belongs to the bacterial ribosomal protein bL17 family. Part of the 50S ribosomal subunit. Contacts protein L32.

In Corynebacterium jeikeium (strain K411), this protein is Large ribosomal subunit protein bL17.